Reading from the N-terminus, the 414-residue chain is uncharacterized protein (414 aa).

The protein belongs to the MG032/MG096/MG288 family.

This is an uncharacterized protein from Mycoplasma genitalium (strain ATCC 33530 / DSM 19775 / NCTC 10195 / G37) (Mycoplasmoides genitalium).